Here is a 239-residue protein sequence, read N- to C-terminus: Fatty acid metabolism regulator protein (239 aa).

Residues 6-74 enclose the HTH gntR-type domain; it reads KGPASFAEKY…HGKPTRVNNF (69 aa). Residues 34–53 constitute a DNA-binding region (H-T-H motif); that stretch reads ERELSELIGVTRTTLREVLQ.

In terms of assembly, homodimer.

It is found in the cytoplasm. Functionally, multifunctional regulator of fatty acid metabolism. The chain is Fatty acid metabolism regulator protein from Shewanella halifaxensis (strain HAW-EB4).